The sequence spans 664 residues: Cyclic nucleotide-gated channel alpha-2 (664 aa).

The segment covering 1–20 (MTEKSNGVKSSPANNHNNHV) has biased composition (polar residues). A disordered region spans residues 1-49 (MTEKSNGVKSSPANNHNNHVPATIKANGKDESRTRSRPQSAADDDTSSE). Residues 1–144 (MTEKSNGVKS…PAGDWYYRWL (144 aa)) lie on the Cytoplasmic side of the membrane. A helical transmembrane segment spans residues 145 to 166 (FVIAMPVLYNWCLLVARACFSD). Residues 167–176 (LQRGYFLVWL) lie on the Extracellular side of the membrane. Residues 177–197 (VLDYFSDVVYIADLFIRLRTG) traverse the membrane as a helical segment. The Cytoplasmic portion of the chain corresponds to 198 to 222 (FLEQGLLVKDPKKLRDNYIHTLQFK). A helical membrane pass occupies residues 223 to 241 (LDVASIIPTDLIYFAVGIH). Residues 242–246 (NPELR) are Extracellular-facing. Residues 247 to 265 (FNRLLHFARMFEFFDRTET) traverse the membrane as a helical segment. At 266 to 272 (RTSYPNI) the chain is on the cytoplasmic side. Residues 270 to 378 (PNIFRISNLV…GNVGSMISNM (109 aa)) form an ion conduction pathway region. The chain crosses the membrane as a helical span at residues 273–296 (FRISNLVLYILVIIHWNACIYYAI). Topologically, residues 297–319 (SKSIGFGVDTWVYPNITDPEYGY) are extracellular. Transmembrane regions (helical) follow at residues 320–354 (LARE…LFVI) and 355–379 (FDFL…SNMN). Residues 337-340 (TIGE) form a selectivity filter region. A C-linker region spans residues 380-456 (ATRAEFQAKI…STLKKVRIFQ (77 aa)). Over 380 to 664 (ATRAEFQAKI…SPEPAAAEQP (285 aa)) the chain is Cytoplasmic. The cyclic nucleotide-binding domain stretch occupies residues 460–580 (AGLLVELVLK…EERGREILMK (121 aa)). 3',5'-cyclic GMP contacts are provided by Gly520, Ser523, Arg536, and Thr537. The 3',5'-cyclic AMP site is built by Arg536 and Thr537. Positions 597-651 (VQEKLKQLETNMETLYTRFGRLLAEYTGAQQKLKQRITVLEVKMKQNTEDDYLSD) form a coiled coil. The disordered stretch occupies residues 644 to 664 (TEDDYLSDGMNSPEPAAAEQP).

It belongs to the cyclic nucleotide-gated cation channel (TC 1.A.1.5) family. CNGA2 subfamily. As to quaternary structure, the olfactory cyclic nucleotide-gated channel is an heterotetramer composed of CNGA2, CNGA4 and CNGB1b subunits with 2:1:1 stoichiometry.

Its subcellular location is the cell projection. The protein resides in the cilium membrane. The enzyme catalyses Ca(2+)(in) = Ca(2+)(out). It catalyses the reaction Na(+)(in) = Na(+)(out). It carries out the reaction K(+)(in) = K(+)(out). The catalysed reaction is NH4(+)(in) = NH4(+)(out). The enzyme catalyses Rb(+)(in) = Rb(+)(out). It catalyses the reaction Li(+)(in) = Li(+)(out). It carries out the reaction Cs(+)(in) = Cs(+)(out). Functionally, pore-forming subunit of the olfactory cyclic nucleotide-gated channel. Operates in the cilia of olfactory sensory neurons where chemical stimulation of the odorant is converted to an electrical signal. Mediates odorant-induced cAMP-dependent Ca(2+) influx triggering neuron depolarization. The rise of intracellular Ca(2+) levels potentiates the olfactory response by activating Ca(2+)-dependent Cl(-) channels, but it also serves as a negative feedback signal to desensitize the channel for rapid adaptation to odorants. Conducts cAMP- and cGMP-gated ion currents, with permeability for monovalent and divalent cations. The protein is Cyclic nucleotide-gated channel alpha-2 of Oryctolagus cuniculus (Rabbit).